Consider the following 217-residue polypeptide: Enoyl-CoA-hydratase (217 aa).

The protein belongs to the enoyl-CoA hydratase/isomerase family.

The catalysed reaction is a (3S)-3-hydroxyacyl-CoA = a (2E)-enoyl-CoA + H2O. It carries out the reaction a 4-saturated-(3S)-3-hydroxyacyl-CoA = a (3E)-enoyl-CoA + H2O. It functions in the pathway antibiotic biosynthesis; vancomycin biosynthesis. Functionally, involved in the biosynthesis of the nonproteinogenic amino acid monomer (S)-3,5-dihydroxyphenylglycine (Dpg) responsible of the production of vancomycin and teicoplanin antibiotics. Catalyzes the syn-addition of a water molecule across the double bond of a trans-2-enoyl-CoA thioester, resulting in the formation of a beta-hydroxyacyl-CoA thioester. Physiologically, DpgB could act as a dehydratase, facilitating the aromatization of the DPA-S-DgpA or DPA-S-CoA intermediate. This is Enoyl-CoA-hydratase (dpgB) from Amycolatopsis orientalis (Nocardia orientalis).